A 445-amino-acid chain; its full sequence is Tryptophan 5-hydroxylase 1 (445 aa).

The ACT domain maps to 19 to 94; it reads AIIFSLKNEV…SIVSMNPTEH (76 aa). Serine 58 carries the post-translational modification Phosphoserine; by PKA. Positions 236, 258, and 266 each coordinate L-tryptophan. Residues histidine 273, histidine 278, and glutamate 318 each coordinate Fe cation. L-tryptophan-binding residues include serine 337 and isoleucine 367.

It belongs to the biopterin-dependent aromatic amino acid hydroxylase family. As to quaternary structure, homotetramer. Requires Fe(2+) as cofactor.

It catalyses the reaction (6R)-L-erythro-5,6,7,8-tetrahydrobiopterin + L-tryptophan + O2 = 5-hydroxy-L-tryptophan + (4aS,6R)-4a-hydroxy-L-erythro-5,6,7,8-tetrahydrobiopterin. It participates in aromatic compound metabolism; serotonin biosynthesis; serotonin from L-tryptophan: step 1/2. Functionally, oxidizes L-tryptophan to 5-hydroxy-l-tryptophan in the rate-determining step of serotonin biosynthesis. This is Tryptophan 5-hydroxylase 1 (TPH1) from Gallus gallus (Chicken).